A 395-amino-acid polypeptide reads, in one-letter code: Zinc finger protein 200 (395 aa).

Residues 157-208 are disordered; the sequence is VNGSNPEGEDPEREPVENEDYREKSSDDDEMDSSLVSQQPPDNQEKERLNTS. The span at 169–181 shows a compositional bias: basic and acidic residues; sequence REPVENEDYREKS. The segment at 246 to 395 is interaction with PRMT3; that stretch reads RRTRRWYTCP…HSACKTRKQK (150 aa). 5 consecutive C2H2-type zinc fingers follow at residues 252 to 274, 280 to 302, 308 to 330, 336 to 358, and 364 to 386; these read YTCPLCGKQFNESSYLISHQRTH, YDCNHCGKSFNHKTNLNKHERIH, YSCSQCGKNFRQNSHRSRHEGIH, FKCPECGKTFPKNEEFVLHLQSH, and YGCKKCGRRFGRLSNCTRHEKTH.

In terms of assembly, interacts (via C-terminus) with PRMT3 (via zinc-finger); the interaction is direct and required to localize protein arginine N-methyltransferase PRMT3 to the nucleus and inhibit its proteasomal degradation. In terms of tissue distribution, highly expressed in testis, weakly expressed in spleen, thymus, prostate, ovary, small intestine colon and peripheral blood leukocytes.

It localises to the nucleus. Functionally, localizes protein arginine N-methyltransferase PRMT3 to the nucleus. The sequence is that of Zinc finger protein 200 (ZNF200) from Homo sapiens (Human).